Reading from the N-terminus, the 765-residue chain is 1,4-alpha-glucan branching enzyme GlgB (765 aa).

The active-site Nucleophile is aspartate 431. The Proton donor role is filled by glutamate 484.

It belongs to the glycosyl hydrolase 13 family. GlgB subfamily. As to quaternary structure, monomer.

It carries out the reaction Transfers a segment of a (1-&gt;4)-alpha-D-glucan chain to a primary hydroxy group in a similar glucan chain.. The protein operates within glycan biosynthesis; glycogen biosynthesis. Catalyzes the formation of the alpha-1,6-glucosidic linkages in glycogen by scission of a 1,4-alpha-linked oligosaccharide from growing alpha-1,4-glucan chains and the subsequent attachment of the oligosaccharide to the alpha-1,6 position. The polypeptide is 1,4-alpha-glucan branching enzyme GlgB (Synechococcus sp. (strain CC9605)).